We begin with the raw amino-acid sequence, 179 residues long: Crossover junction endodeoxyribonuclease RuvC (179 aa).

Active-site residues include aspartate 7, glutamate 67, and aspartate 139. 3 residues coordinate Mg(2+): aspartate 7, glutamate 67, and aspartate 139.

This sequence belongs to the RuvC family. In terms of assembly, homodimer which binds Holliday junction (HJ) DNA. The HJ becomes 2-fold symmetrical on binding to RuvC with unstacked arms; it has a different conformation from HJ DNA in complex with RuvA. In the full resolvosome a probable DNA-RuvA(4)-RuvB(12)-RuvC(2) complex forms which resolves the HJ. Mg(2+) is required as a cofactor.

The protein localises to the cytoplasm. It carries out the reaction Endonucleolytic cleavage at a junction such as a reciprocal single-stranded crossover between two homologous DNA duplexes (Holliday junction).. Functionally, the RuvA-RuvB-RuvC complex processes Holliday junction (HJ) DNA during genetic recombination and DNA repair. Endonuclease that resolves HJ intermediates. Cleaves cruciform DNA by making single-stranded nicks across the HJ at symmetrical positions within the homologous arms, yielding a 5'-phosphate and a 3'-hydroxyl group; requires a central core of homology in the junction. The consensus cleavage sequence is 5'-(A/T)TT(C/G)-3'. Cleavage occurs on the 3'-side of the TT dinucleotide at the point of strand exchange. HJ branch migration catalyzed by RuvA-RuvB allows RuvC to scan DNA until it finds its consensus sequence, where it cleaves and resolves the cruciform DNA. The protein is Crossover junction endodeoxyribonuclease RuvC of Sorangium cellulosum (strain So ce56) (Polyangium cellulosum (strain So ce56)).